Reading from the N-terminus, the 381-residue chain is Probable envelope ADP,ATP carrier protein, chloroplastic (381 aa).

A chloroplast-targeting transit peptide spans 1 to 26 (MEEDRAILTFHRIPSLNSSLITTSSP). The next 5 membrane-spanning stretches (helical) occupy residues 78-98 (LAIL…ALAG), 154-179 (LPQV…NLFK), 191-211 (LAAG…LDVL), 237-257 (IASF…YIAV), and 281-301 (LLTA…LDTV). 3 Solcar repeats span residues 85–177 (PKDA…YKNL), 185–268 (LSVI…VKKS), and 279–359 (SSLL…VKRL). Arginine 159 is a binding site for ADP. Residue arginine 302 participates in ADP binding. Residues 334 to 360 (GFLPNALKTLPNSSIRLTTFDMVKRLI) form a helical membrane-spanning segment.

Belongs to the mitochondrial carrier (TC 2.A.29) family.

The protein localises to the plastid. The protein resides in the chloroplast membrane. Functionally, transports adenine nucleotides. The protein is Probable envelope ADP,ATP carrier protein, chloroplastic (EAAC) of Arabidopsis thaliana (Mouse-ear cress).